The sequence spans 577 residues: Beta-fructofuranosidase, insoluble isoenzyme 1 (577 aa).

Positions 1–22 (MGTRLLALAPWLLLLLLQLAGA) are cleaved as a signal peptide. Aspartate 63 is an active-site residue. N-linked (GlcNAc...) asparagine glycans are attached at residues asparagine 158, asparagine 183, and asparagine 333.

The protein belongs to the glycosyl hydrolase 32 family.

It is found in the secreted. Its subcellular location is the extracellular space. It localises to the apoplast. The protein localises to the cell wall. It catalyses the reaction Hydrolysis of terminal non-reducing beta-D-fructofuranoside residues in beta-D-fructofuranosides.. In terms of biological role, may play a role in sucrose partitioning during seed development and in stress response. The polypeptide is Beta-fructofuranosidase, insoluble isoenzyme 1 (CIN1) (Oryza sativa subsp. indica (Rice)).